A 160-amino-acid polypeptide reads, in one-letter code: Type IV major fimbrial protein FimA (160 aa).

Residues 1-7 (MKSLQKG) constitute a propeptide, leader sequence. Position 8 is an N-methylphenylalanine (F8). A helical transmembrane segment spans residues 8 to 28 (FTLIELMIVVAIIGILAAFAI). A disulfide bond links C63 and C105.

This sequence belongs to the N-Me-Phe pilin family. In terms of assembly, the pili are polar flexible filaments of about 5.4 nanometers diameter and 2.5 micrometers average length; they consist of only a single polypeptide chain arranged in a helical configuration of five subunits per turn in the assembled pilus.

It is found in the fimbrium. Its subcellular location is the membrane. Functionally, major component of the type IV fimbriae that plays an essential role in twitching motility, natural transformation, and protease secretion. The polypeptide is Type IV major fimbrial protein FimA (fimA) (Dichelobacter nodosus (Bacteroides nodosus)).